The sequence spans 457 residues: Acetylcholine receptor subunit alpha (457 aa).

The N-terminal stretch at 1-20 (MEPRPLLLLLGLCSAGLVLG) is a signal peptide. At 21 to 230 (SEHETRLVAK…ITYHFVMQRL (210 aa)) the chain is on the extracellular side. Intrachain disulfides connect Cys-148/Cys-162 and Cys-212/Cys-213. An N-linked (GlcNAc...) asparagine glycan is attached at Asn-161. The next 3 helical transmembrane spans lie at 231–255 (PLYFIVNVIIPCLLFSFLTGLVFYL), 263–281 (MTLSISVLLSLTVFLLVIV), and 297–316 (YMLFTMVFVIASIIITVIVI). Over 317–428 (NTHHRSPSTH…WKYVAMVMDH (112 aa)) the chain is Cytoplasmic. The helical transmembrane segment at 429 to 447 (ILLAVFMLVCIIGTLAVFA) threads the bilayer.

It belongs to the ligand-gated ion channel (TC 1.A.9) family. Acetylcholine receptor (TC 1.A.9.1) subfamily. Alpha-1/CHRNA1 sub-subfamily. As to quaternary structure, one of the alpha chains that assemble within the acetylcholine receptor, a pentamer of two alpha chains, a beta, a delta, and a gamma (in immature muscle) or epsilon (in mature muscle) chains. The muscle heteropentamer composed of alpha-1, beta-1, delta, epsilon subunits interacts with the alpha-conotoxin ImII.

It is found in the postsynaptic cell membrane. Its subcellular location is the cell membrane. The enzyme catalyses K(+)(in) = K(+)(out). It catalyses the reaction Na(+)(in) = Na(+)(out). In terms of biological role, upon acetylcholine binding, the AChR responds by an extensive change in conformation that affects all subunits and leads to opening of an ion-conducting channel across the plasma membrane. The protein is Acetylcholine receptor subunit alpha (CHRNA1) of Bos taurus (Bovine).